We begin with the raw amino-acid sequence, 138 residues long: Large ribosomal subunit protein uL16 (138 aa).

Residues 1 to 15 show a composition bias toward basic residues; that stretch reads MLSPKKVKYRKKQRG. The segment at 1–21 is disordered; it reads MLSPKKVKYRKKQRGRLSGEA.

This sequence belongs to the universal ribosomal protein uL16 family. Part of the 50S ribosomal subunit.

In terms of biological role, binds 23S rRNA and is also seen to make contacts with the A and possibly P site tRNAs. This Borreliella afzelii (strain PKo) (Borrelia afzelii) protein is Large ribosomal subunit protein uL16.